Here is a 369-residue protein sequence, read N- to C-terminus: Cobalt-precorrin-5B C(1)-methyltransferase (369 aa).

Belongs to the CbiD family.

The catalysed reaction is Co-precorrin-5B + S-adenosyl-L-methionine = Co-precorrin-6A + S-adenosyl-L-homocysteine. Its pathway is cofactor biosynthesis; adenosylcobalamin biosynthesis; cob(II)yrinate a,c-diamide from sirohydrochlorin (anaerobic route): step 6/10. Catalyzes the methylation of C-1 in cobalt-precorrin-5B to form cobalt-precorrin-6A. The sequence is that of Cobalt-precorrin-5B C(1)-methyltransferase from Brucella melitensis biotype 2 (strain ATCC 23457).